Consider the following 220-residue polypeptide: MPKFNANGLLRSFAAEMKKPWTAESLWYETVAKHPPTFQYARRIVPLYDPNKVKSRGKRLRKSMYQPQEIQWPEDKLRKRFYRDHPWELARPQIIAENDGNDQQYCDWSHMDQPRKALSGESVVQRTLWLIENSNMPVENAYDQARKEFYHLRAEQEIQQRVAHDQAQALGAVFTKSDLELGYEMDQNALNSWFDNASQYAEANRTKFTDPSVDISKTTQ.

The protein belongs to the mitochondrion-specific ribosomal protein mS23 family. As to quaternary structure, component of the mitochondrial small ribosomal subunit (mt-SSU). Mature yeast 74S mitochondrial ribosomes consist of a small (37S) and a large (54S) subunit. The 37S small subunit contains a 15S ribosomal RNA (15S mt-rRNA) and at least 32 different proteins. The 54S large subunit contains a 21S rRNA (21S mt-rRNA) and at least 45 different proteins.

Its subcellular location is the mitochondrion. Component of the mitochondrial ribosome (mitoribosome), a dedicated translation machinery responsible for the synthesis of mitochondrial genome-encoded proteins, including at least some of the essential transmembrane subunits of the mitochondrial respiratory chain. The mitoribosomes are attached to the mitochondrial inner membrane and translation products are cotranslationally integrated into the membrane. The polypeptide is Small ribosomal subunit protein mS23 (rsm25) (Schizosaccharomyces pombe (strain 972 / ATCC 24843) (Fission yeast)).